We begin with the raw amino-acid sequence, 152 residues long: Lipoprotein signal peptidase (152 aa).

A run of 3 helical transmembrane segments spans residues 5–25 (LFVL…FWIV), 61–81 (WFFV…LATH), and 84–104 (LNIW…GNFI). Residues Asp114 and Asp130 contribute to the active site. Residues 125 to 145 (IFNVADSYLTVGVILLVICLW) traverse the membrane as a helical segment.

This sequence belongs to the peptidase A8 family.

It is found in the cell membrane. The enzyme catalyses Release of signal peptides from bacterial membrane prolipoproteins. Hydrolyzes -Xaa-Yaa-Zaa-|-(S,diacylglyceryl)Cys-, in which Xaa is hydrophobic (preferably Leu), and Yaa (Ala or Ser) and Zaa (Gly or Ala) have small, neutral side chains.. The protein operates within protein modification; lipoprotein biosynthesis (signal peptide cleavage). Functionally, this protein specifically catalyzes the removal of signal peptides from prolipoproteins. In Streptococcus pyogenes serotype M6 (strain ATCC BAA-946 / MGAS10394), this protein is Lipoprotein signal peptidase.